The primary structure comprises 96 residues: Large ribosomal subunit protein uL23 (96 aa).

This sequence belongs to the universal ribosomal protein uL23 family. Part of the 50S ribosomal subunit. Contacts protein L29, and trigger factor when it is bound to the ribosome.

Its function is as follows. One of the early assembly proteins it binds 23S rRNA. One of the proteins that surrounds the polypeptide exit tunnel on the outside of the ribosome. Forms the main docking site for trigger factor binding to the ribosome. This chain is Large ribosomal subunit protein uL23, found in Maridesulfovibrio salexigens (strain ATCC 14822 / DSM 2638 / NCIMB 8403 / VKM B-1763) (Desulfovibrio salexigens).